The primary structure comprises 184 residues: Calmodulin-related protein (184 aa).

4 consecutive EF-hand domains span residues 8 to 43 (DQISEFKEAFSLFDKDGDGCITTKELGTVMRSLGQN), 44 to 79 (PTEAELQDMINEVDADGNGTIDFPEFLNLMARKMKD), 81 to 116 (DSEEELKEAFRVFDKDQNGFISAAELRHVMTNLGEK), and 117 to 152 (LTDEEVDEMIREADVDGDGQINYEEFVKVMMANRRR). Residues D21, D23, D25, C27, E32, D57, D59, N61, T63, E68, D94, D96, N98, and E105 each coordinate Ca(2+). At K116 the chain carries N6,N6,N6-trimethyllysine. Ca(2+)-binding residues include D130, D132, D134, Q136, and E141. The tract at residues 156–184 (EESKRSVNSNISRSNNGRKVRKRDRCTIL) is disordered. The span at 161-170 (SVNSNISRSN) shows a compositional bias: low complexity. Over residues 171 to 184 (NGRKVRKRDRCTIL) the composition is skewed to basic residues.

This sequence belongs to the calmodulin family.

Functionally, calmodulin mediates the control of a large number of enzymes, ion channels and other proteins by Ca(2+). Among the enzymes to be stimulated by the calmodulin-Ca(2+) complex are a number of protein kinases and phosphatases. This chain is Calmodulin-related protein (CAM53), found in Petunia hybrida (Petunia).